The primary structure comprises 177 residues: Large ribosomal subunit protein bL9 (177 aa).

This sequence belongs to the bacterial ribosomal protein bL9 family.

Binds to the 23S rRNA. This is Large ribosomal subunit protein bL9 from Rhodopirellula baltica (strain DSM 10527 / NCIMB 13988 / SH1).